Reading from the N-terminus, the 267-residue chain is Trehalose-phosphate phosphatase (267 aa).

Aspartate 20 serves as the catalytic Nucleophile. Aspartate 20, aspartate 22, and aspartate 198 together coordinate Mg(2+). 20–22 lines the substrate pocket; sequence DLD.

The protein belongs to the trehalose phosphatase family. The cofactor is Mg(2+).

It catalyses the reaction alpha,alpha-trehalose 6-phosphate + H2O = alpha,alpha-trehalose + phosphate. Its pathway is glycan biosynthesis; trehalose biosynthesis. Its function is as follows. Removes the phosphate from trehalose 6-phosphate to produce free trehalose. This Salmonella typhimurium (strain SL1344) protein is Trehalose-phosphate phosphatase (otsB).